The following is a 256-amino-acid chain: Type III pantothenate kinase (256 aa).

7 to 14 contacts ATP; that stretch reads DIGNTNVV. 108 to 111 is a binding site for substrate; that stretch reads GADC. The Proton acceptor role is filled by D110. A K(+)-binding site is contributed by D130. T133 serves as a coordination point for ATP. T185 contributes to the substrate binding site.

Belongs to the type III pantothenate kinase family. In terms of assembly, homodimer. The cofactor is NH4(+). Requires K(+) as cofactor.

The protein resides in the cytoplasm. It carries out the reaction (R)-pantothenate + ATP = (R)-4'-phosphopantothenate + ADP + H(+). Its pathway is cofactor biosynthesis; coenzyme A biosynthesis; CoA from (R)-pantothenate: step 1/5. Catalyzes the phosphorylation of pantothenate (Pan), the first step in CoA biosynthesis. This Bifidobacterium adolescentis (strain ATCC 15703 / DSM 20083 / NCTC 11814 / E194a) protein is Type III pantothenate kinase.